Reading from the N-terminus, the 1207-residue chain is Systemin receptor SR160 (1207 aa).

The first 34 residues, 1–34, serve as a signal peptide directing secretion; that stretch reads MKAHKTVFNQHPLSLNKLFFVLLLIFFLPPASPA. A Cys pair 1 motif is present at residues 71–78; the sequence is CSFTGVSC. LRR repeat units follow at residues 109–131, 135–157, 161–181, 186–207, 213–234, 235–257, 258–280, 282–304, 305–325, 329–350, 353–375, 378–401, 402–423, 428–450, 452–474, 476–499, 500–523, 524–547, 548–570, and 572–594; these read NLES…AKSQ, TLDS…SSFG, NLKS…EMLK, SLQV…PWVS, ELEF…LDFK, NLSY…KDCS, NLQH…LSSC, KLSF…PSES, LQYL…QLAD, TVVE…SLGE, SLEL…TLLK, NIKT…SNLP, KLET…GICK, NLKV…LSNC, QLVS…LGSL, KLKD…MYLQ, ALEN…SNCT, KLNW…GRLS, NLAI…LGNC, and SLIW…LFKQ. N119 carries an N-linked (GlcNAc...) asparagine glycan. N-linked (GlcNAc...) asparagine glycans are attached at residues N166 and N196. 2 N-linked (GlcNAc...) asparagine glycosylation sites follow: N235 and N245. The N-linked (GlcNAc...) asparagine glycan is linked to N287. 2 N-linked (GlcNAc...) asparagine glycosylation sites follow: N339 and N363. 2 N-linked (GlcNAc...) asparagine glycosylation sites follow: N412 and N449. Residue N521 is glycosylated (N-linked (GlcNAc...) asparagine). Residues N556, N584, N646, and N662 are each glycosylated (N-linked (GlcNAc...) asparagine). LRR repeat units follow at residues 664-686, 688-711, 712-735, and 736-758; these read SMIF…LGAM, YLSI…GGLK, NVAI…TSLT, and LLGE…APFD. Residues N724, N746, and N767 are each glycosylated (N-linked (GlcNAc...) asparagine). Positions 771 to 779 match the Cys pair 2 motif; the sequence is CGYPLPLPC. The helical transmembrane segment at 803 to 823 threads the bilayer; sequence SVAMGLLFSLFCIFGLIIVAI. The Protein kinase domain maps to 888–1163; sequence FHNDSLVGSG…IQVMAMFKEI (276 aa). ATP contacts are provided by residues 894 to 902 and K916; that span reads VGSGGFGDV. Residue D1014 is the Proton acceptor of the active site.

This sequence belongs to the protein kinase superfamily. Ser/Thr protein kinase family. Glycosylated.

The protein resides in the cell membrane. The catalysed reaction is L-seryl-[protein] + ATP = O-phospho-L-seryl-[protein] + ADP + H(+). The enzyme catalyses L-threonyl-[protein] + ATP = O-phospho-L-threonyl-[protein] + ADP + H(+). In terms of biological role, receptor with a serine/threonine-protein kinase activity. Involved in the perception of systemin, a peptide hormone responsible for the systemic activation of defense genes in leaves of wounded plants. May also regulate, in response to brassinosteroid binding, a signaling cascade involved in plant development. The chain is Systemin receptor SR160 from Solanum peruvianum (Peruvian tomato).